The following is a 642-amino-acid chain: Threonine--tRNA ligase (642 aa).

One can recognise a TGS domain in the interval 1-61; that stretch reads MPIITLPDGS…EHDASLEIIT (61 aa). Residues 244-535 are catalytic; that stretch reads DHRKIGKQLD…LIEEYAGFFP (292 aa). Positions 335, 386, and 512 each coordinate Zn(2+).

The protein belongs to the class-II aminoacyl-tRNA synthetase family. In terms of assembly, homodimer. The cofactor is Zn(2+).

The protein localises to the cytoplasm. It catalyses the reaction tRNA(Thr) + L-threonine + ATP = L-threonyl-tRNA(Thr) + AMP + diphosphate + H(+). Catalyzes the attachment of threonine to tRNA(Thr) in a two-step reaction: L-threonine is first activated by ATP to form Thr-AMP and then transferred to the acceptor end of tRNA(Thr). Also edits incorrectly charged L-seryl-tRNA(Thr). The sequence is that of Threonine--tRNA ligase from Vibrio cholerae serotype O1 (strain M66-2).